A 1145-amino-acid chain; its full sequence is DNA polymerase II large subunit (1145 aa).

Positions 284 to 303 (KSSSESDEDEETDGKPKIKP) are disordered.

The protein belongs to the archaeal DNA polymerase II family. Heterodimer of a large subunit and a small subunit.

The catalysed reaction is DNA(n) + a 2'-deoxyribonucleoside 5'-triphosphate = DNA(n+1) + diphosphate. It carries out the reaction Exonucleolytic cleavage in the 3'- to 5'-direction to yield nucleoside 5'-phosphates.. Possesses two activities: a DNA synthesis (polymerase) and an exonucleolytic activity that degrades single-stranded DNA in the 3'- to 5'-direction. Has a template-primer preference which is characteristic of a replicative DNA polymerase. This chain is DNA polymerase II large subunit, found in Methanococcoides burtonii (strain DSM 6242 / NBRC 107633 / OCM 468 / ACE-M).